The following is a 282-amino-acid chain: HMG box-containing protein R545 (282 aa).

The interval 1–282 (MPKKTATKAN…KKEASDEESD (282 aa)) is disordered. Residues 16-29 (DSENDSVVSEEEDN) are compositionally biased toward acidic residues. Over residues 70-87 (KGKVNAKKAPAKKAPVKK) the composition is skewed to basic residues. The segment covering 93–121 (DSDNEEDEASEDGSDDEEDVVSADDSDSD) has biased composition (acidic residues). Residues 127–153 (KAAKKAPAKKAPAKKAPAKKAPAKKGK) show a composition bias toward basic residues. 2 stretches are compositionally biased toward basic and acidic residues: residues 176 to 187 (TKKDGDKPKKPL) and 197 to 214 (RMPE…KEYM). The segment at residues 183–252 (PKKPLSDYQK…KAPAKGGSKS (70 aa)) is a DNA-binding region (HMG box). Positions 253–273 (TAKKAPAKKAPAKKAPAKKSK) are enriched in basic residues.

This is HMG box-containing protein R545 from Acanthamoeba polyphaga mimivirus (APMV).